Consider the following 355-residue polypeptide: Ion-translocating oxidoreductase complex subunit D (355 aa).

A run of 5 helical transmembrane segments spans residues 13–33, 35–55, 77–97, 98–118, and 128–148; these read GKLT…ALAV, VYYF…LALI, VILT…YWVI, LIGT…LGQN, and VVLL…ISLL. Position 186 is an FMN phosphoryl threonine (threonine 186). 5 consecutive transmembrane segments (helical) span residues 216–236, 245–265, 267–287, 294–314, and 318–338; these read AGLG…FLIW, PVAI…FGNA, AVGF…FFIA, PVTP…ICLI, and GNYP…VPLI.

The protein belongs to the NqrB/RnfD family. As to quaternary structure, the complex is composed of six subunits: RnfA, RnfB, RnfC, RnfD, RnfE and RnfG. FMN serves as cofactor.

It localises to the cell inner membrane. In terms of biological role, part of a membrane-bound complex that couples electron transfer with translocation of ions across the membrane. In Actinobacillus succinogenes (strain ATCC 55618 / DSM 22257 / CCUG 43843 / 130Z), this protein is Ion-translocating oxidoreductase complex subunit D.